The following is a 62-amino-acid chain: MPEEDVVDQKRYFEESCKPKCVKPLLEYQACVKRIQDDESGHKHCTGQYFDYWHCVDKCVSV.

2 cysteine pairs are disulfide-bonded: Cys17-Cys59 and Cys31-Cys45.

The protein belongs to the UQCRH/QCR6 family. In terms of assembly, component of the ubiquinol-cytochrome c oxidoreductase (cytochrome b-c1 complex, complex III, CIII), a multisubunit enzyme composed of 10 subunits. The complex is composed of 3 respiratory subunits cytochrome b (MT-CYB), cytochrome c1 (CYC1-1 or CYC1-2) and Rieske protein (UCR1-1 or UCR1-2), 2 core protein subunits MPPalpha1 (or MPPalpha2) and MPPB, and 5 low-molecular weight protein subunits QCR7-1 (or QCR7-2), UCRQ-1 (or UCRQ-2), QCR9, UCRY and probably QCR6-1 (or QCR6-2). The complex exists as an obligatory dimer and forms supercomplexes (SCs) in the inner mitochondrial membrane with NADH-ubiquinone oxidoreductase (complex I, CI), resulting in different assemblies (supercomplexes SCI(1)III(2) and SCI(2)III(4)).

It is found in the mitochondrion inner membrane. Component of the ubiquinol-cytochrome c oxidoreductase, a multisubunit transmembrane complex that is part of the mitochondrial electron transport chain which drives oxidative phosphorylation. The respiratory chain contains 3 multisubunit complexes succinate dehydrogenase (complex II, CII), ubiquinol-cytochrome c oxidoreductase (cytochrome b-c1 complex, complex III, CIII) and cytochrome c oxidase (complex IV, CIV), that cooperate to transfer electrons derived from NADH and succinate to molecular oxygen, creating an electrochemical gradient over the inner membrane that drives transmembrane transport and the ATP synthase. The cytochrome b-c1 complex catalyzes electron transfer from ubiquinol to cytochrome c, linking this redox reaction to translocation of protons across the mitochondrial inner membrane, with protons being carried across the membrane as hydrogens on the quinol. In the process called Q cycle, 2 protons are consumed from the matrix, 4 protons are released into the intermembrane space and 2 electrons are passed to cytochrome c. The polypeptide is Cytochrome b-c1 complex subunit 6-2, mitochondrial (QCR6-2) (Arabidopsis thaliana (Mouse-ear cress)).